The following is a 188-amino-acid chain: Molybdopterin synthase catalytic subunit (188 aa).

Residues 1–10 (MSTSETSSYT) are compositionally biased toward polar residues. Residues 1-21 (MSTSETSSYTPDIPSEPVTKT) are disordered. Substrate is bound by residues 123–124 (HR), Lys139, and 146–148 (KLE).

It belongs to the MoaE family. MOCS2B subfamily. In terms of assembly, heterotetramer; composed of 2 small (MOCS2A) and 2 large (MOCS2B) subunits.

It localises to the cytoplasm. It carries out the reaction 2 [molybdopterin-synthase sulfur-carrier protein]-C-terminal-Gly-aminoethanethioate + cyclic pyranopterin phosphate + H2O = molybdopterin + 2 [molybdopterin-synthase sulfur-carrier protein]-C-terminal Gly-Gly + 2 H(+). It participates in cofactor biosynthesis; molybdopterin biosynthesis. In terms of biological role, catalytic subunit of the molybdopterin synthase complex, a complex that catalyzes the conversion of precursor Z into molybdopterin. Acts by mediating the incorporation of 2 sulfur atoms from thiocarboxylated MOCS2A into precursor Z to generate a dithiolene group. The polypeptide is Molybdopterin synthase catalytic subunit (Phaeosphaeria nodorum (strain SN15 / ATCC MYA-4574 / FGSC 10173) (Glume blotch fungus)).